A 668-amino-acid chain; its full sequence is DNA ligase (668 aa).

NAD(+) contacts are provided by residues 32-36 (DAEYD), 81-82 (SL), and E113. Catalysis depends on K115, which acts as the N6-AMP-lysine intermediate. NAD(+) contacts are provided by R136, E173, K289, and K313. Residues C407, C410, C425, and C431 each coordinate Zn(2+). Residues 590–668 (ASEQPFAGKT…EEELQQALQG (79 aa)) enclose the BRCT domain.

This sequence belongs to the NAD-dependent DNA ligase family. LigA subfamily. Mg(2+) serves as cofactor. The cofactor is Mn(2+).

It catalyses the reaction NAD(+) + (deoxyribonucleotide)n-3'-hydroxyl + 5'-phospho-(deoxyribonucleotide)m = (deoxyribonucleotide)n+m + AMP + beta-nicotinamide D-nucleotide.. Functionally, DNA ligase that catalyzes the formation of phosphodiester linkages between 5'-phosphoryl and 3'-hydroxyl groups in double-stranded DNA using NAD as a coenzyme and as the energy source for the reaction. It is essential for DNA replication and repair of damaged DNA. This is DNA ligase from Aeromonas hydrophila subsp. hydrophila (strain ATCC 7966 / DSM 30187 / BCRC 13018 / CCUG 14551 / JCM 1027 / KCTC 2358 / NCIMB 9240 / NCTC 8049).